The sequence spans 501 residues: Bifunctional purine biosynthesis protein PurH (501 aa).

Residues 1–144 (MKKRALISVF…KNFKDVVVLS (144 aa)) form the MGS-like domain.

The protein belongs to the PurH family.

It catalyses the reaction (6R)-10-formyltetrahydrofolate + 5-amino-1-(5-phospho-beta-D-ribosyl)imidazole-4-carboxamide = 5-formamido-1-(5-phospho-D-ribosyl)imidazole-4-carboxamide + (6S)-5,6,7,8-tetrahydrofolate. It carries out the reaction IMP + H2O = 5-formamido-1-(5-phospho-D-ribosyl)imidazole-4-carboxamide. The protein operates within purine metabolism; IMP biosynthesis via de novo pathway; 5-formamido-1-(5-phospho-D-ribosyl)imidazole-4-carboxamide from 5-amino-1-(5-phospho-D-ribosyl)imidazole-4-carboxamide (10-formyl THF route): step 1/1. It functions in the pathway purine metabolism; IMP biosynthesis via de novo pathway; IMP from 5-formamido-1-(5-phospho-D-ribosyl)imidazole-4-carboxamide: step 1/1. In Clostridium perfringens (strain ATCC 13124 / DSM 756 / JCM 1290 / NCIMB 6125 / NCTC 8237 / Type A), this protein is Bifunctional purine biosynthesis protein PurH.